The sequence spans 445 residues: UDP-N-acetylmuramoylalanine--D-glutamate ligase (445 aa).

117 to 123 lines the ATP pocket; sequence GSNGKTT.

It belongs to the MurCDEF family.

The protein resides in the cytoplasm. The catalysed reaction is UDP-N-acetyl-alpha-D-muramoyl-L-alanine + D-glutamate + ATP = UDP-N-acetyl-alpha-D-muramoyl-L-alanyl-D-glutamate + ADP + phosphate + H(+). It functions in the pathway cell wall biogenesis; peptidoglycan biosynthesis. In terms of biological role, cell wall formation. Catalyzes the addition of glutamate to the nucleotide precursor UDP-N-acetylmuramoyl-L-alanine (UMA). The chain is UDP-N-acetylmuramoylalanine--D-glutamate ligase from Neisseria meningitidis serogroup C (strain 053442).